We begin with the raw amino-acid sequence, 355 residues long: Guanine nucleotide-binding protein subunit beta-5a (355 aa).

The tract at residues M1–T23 is disordered. WD repeat units lie at residues G63 to A102, M105 to L144, M153 to H194, G195 to E238, S239 to I278, S280 to I322, and G325 to A355.

The protein belongs to the WD repeat G protein beta family. As to quaternary structure, may interact with RGS9; this interaction stabilizes both proteins and increases RGS9 GTPase-activating protein (GAP) activity, hence accelerating the deactivation of D(2) dopamine receptor-mediated signaling.

It is found in the membrane. In terms of biological role, enhances GTPase-activating protein (GAP) activity of regulator of G protein signaling (RGS) proteins, such as RGS7 and RGS9, hence involved in the termination of the signaling initiated by the G protein coupled receptors (GPCRs) by accelerating the GTP hydrolysis on the G-alpha subunits, thereby promoting their inactivation. Increases RGS7 GTPase-activating protein (GAP) activity, thereby regulating mood and cognition. Increases RGS9 GTPase-activating protein (GAP) activity, hence contributes to the deactivation of G protein signaling initiated by D(2) dopamine receptors. Along with gnb5b, plays an important role in neuronal signaling, including in the parasympathetic, but not sympathetic, control of heart rate. The sequence is that of Guanine nucleotide-binding protein subunit beta-5a from Danio rerio (Zebrafish).